A 1677-amino-acid polypeptide reads, in one-letter code: ELMO domain-containing protein E (1677 aa).

Disordered stretches follow at residues 112–139, 168–194, 264–372, 592–625, 775–801, 888–947, 982–1002, 1047–1075, 1122–1141, 1197–1248, 1261–1404, 1434–1454, 1467–1593, and 1654–1677; these read TTTS…SSPS, NSKD…SNIK, QLHG…NTTE, DDDN…RSNS, PNSN…STNN, INKN…NQDI, KIRS…SQPE, STNN…ETRS, KQKS…GNVS, NNNI…DNHA, DDDD…RKKR, SPGS…PQPE, KNPE…GDVS, and ESQR…SSSK. Composition is skewed to low complexity over residues 115 to 139 and 172 to 194; these read SSSS…SSPS and TNNS…SNIK. The span at 269 to 278 shows a compositional bias: gly residues; sequence SIGGGGGGSG. 3 stretches are compositionally biased toward low complexity: residues 307 to 334, 341 to 352, and 597 to 616; these read SQSN…KPNN, TTTTTTTTTTTS, and NNNN…NNYN. The region spanning 492–710 is the ELMO domain; it reads SHQILLSDLW…HTREIIEKVC (219 aa). A compositionally biased stretch (gly residues) spans 891-903; that stretch reads NGGGGGGGGGGGV. A compositionally biased stretch (acidic residues) spans 922–933; that stretch reads IDDSDDENDNDE. 2 stretches are compositionally biased toward low complexity: residues 934 to 946 and 985 to 996; these read VNNN…INQD and SSSSTPDTSSPP. Residues 1186-1212 adopt a coiled-coil conformation; the sequence is LLDDVLDLNQTNNNIDNENDDINEAII. Residues 1228–1238 show a composition bias toward acidic residues; sequence EEEEEEEEEEE. Residues 1285 to 1305 show a composition bias toward low complexity; the sequence is NNTTTTTTTTTTTTTTTTNTT. A compositionally biased stretch (polar residues) spans 1306 to 1334; the sequence is GQKRISILSTDTNRPGSSNYGESSLSNGS. Over residues 1387-1397 the composition is skewed to acidic residues; it reads DDEDDEDDDDK. Polar residues predominate over residues 1445–1454; that stretch reads PHLSVSPQPE. Low complexity-rich tracts occupy residues 1475–1488, 1503–1574, and 1663–1677; these read LSSS…PLLS, SNLI…PSSS, and ASSS…SSSK.

The polypeptide is ELMO domain-containing protein E (elmoE) (Dictyostelium discoideum (Social amoeba)).